Reading from the N-terminus, the 405-residue chain is uncharacterized protein (405 aa).

Transmembrane regions (helical) follow at residues 9–29 (VFALLLSQSFQSLAGVLVTIV), 41–61 (VFLAGLILSFMSFASIAASFC), 74–94 (VLAGANLLRAVFIILMAYSVT), 98–118 (QAFFWITLLFVFCFSFAGAFF), 138–158 (ANGVISLSNQLFLTAGWGLGG), 168–190 (LVVGAAICLFVLSGASISVLHVN), 227–247 (ALAGSVWSSAILLAFTAAVLH), 252–272 (WWGMFNASYFIGAIVGSVIAI), 291–311 (LVMSALTLLFSFSPVPFLCAL), and 373–393 (IAFIAAAALYIMTFLIALAQP).

This sequence belongs to the major facilitator superfamily. Drug:H(+) antiporter-3 (DHA3) (TC 2.A.1.21) family.

The protein resides in the cell membrane. This is an uncharacterized protein from Bacillus subtilis (strain 168).